The chain runs to 234 residues: Small ribosomal subunit protein uS2 (234 aa).

The protein belongs to the universal ribosomal protein uS2 family.

This chain is Small ribosomal subunit protein uS2, found in Prochlorococcus marinus (strain MIT 9515).